Consider the following 246-residue polypeptide: Uridylate kinase (246 aa).

20–23 (KISG) is an ATP binding site. Residues 28–33 (GDQGYG) are involved in allosteric activation by GTP. Position 62 (G62) interacts with UMP. ATP contacts are provided by G63 and R67. Residues D82 and 143–150 (TGNPYFTT) each bind UMP. Positions 170, 176, and 179 each coordinate ATP.

This sequence belongs to the UMP kinase family. In terms of assembly, homohexamer.

The protein resides in the cytoplasm. The enzyme catalyses UMP + ATP = UDP + ADP. Its pathway is pyrimidine metabolism; CTP biosynthesis via de novo pathway; UDP from UMP (UMPK route): step 1/1. Allosterically activated by GTP. Inhibited by UTP. Functionally, catalyzes the reversible phosphorylation of UMP to UDP. This Cereibacter sphaeroides (strain ATCC 17029 / ATH 2.4.9) (Rhodobacter sphaeroides) protein is Uridylate kinase.